A 474-amino-acid chain; its full sequence is tRNA-2-methylthio-N(6)-dimethylallyladenosine synthase (474 aa).

Residues 3–120 enclose the MTTase N-terminal domain; it reads KKLHIKTWGC…LPEMINAVRG (118 aa). Positions 12, 49, 83, 157, 161, and 164 each coordinate [4Fe-4S] cluster. One can recognise a Radical SAM core domain in the interval 143–375; the sequence is RADGPTAFVS…QERINQQAMA (233 aa). Positions 378-441 constitute a TRAM domain; the sequence is RRMLGTVQRI…TNSLRGKIVR (64 aa).

Belongs to the methylthiotransferase family. MiaB subfamily. Monomer. [4Fe-4S] cluster is required as a cofactor.

The protein localises to the cytoplasm. The catalysed reaction is N(6)-dimethylallyladenosine(37) in tRNA + (sulfur carrier)-SH + AH2 + 2 S-adenosyl-L-methionine = 2-methylsulfanyl-N(6)-dimethylallyladenosine(37) in tRNA + (sulfur carrier)-H + 5'-deoxyadenosine + L-methionine + A + S-adenosyl-L-homocysteine + 2 H(+). Functionally, catalyzes the methylthiolation of N6-(dimethylallyl)adenosine (i(6)A), leading to the formation of 2-methylthio-N6-(dimethylallyl)adenosine (ms(2)i(6)A) at position 37 in tRNAs that read codons beginning with uridine. In Klebsiella pneumoniae (strain 342), this protein is tRNA-2-methylthio-N(6)-dimethylallyladenosine synthase.